The chain runs to 94 residues: Integration host factor subunit beta (94 aa).

This sequence belongs to the bacterial histone-like protein family. In terms of assembly, heterodimer of an alpha and a beta chain.

Its function is as follows. This protein is one of the two subunits of integration host factor, a specific DNA-binding protein that functions in genetic recombination as well as in transcriptional and translational control. This chain is Integration host factor subunit beta, found in Salmonella arizonae (strain ATCC BAA-731 / CDC346-86 / RSK2980).